The chain runs to 115 residues: Phosphorelay protein LuxU (115 aa).

Residues G17 to Y107 enclose the HPt domain. H56 bears the Phosphohistidine mark.

Monomer.

Functionally, phosphorelay protein which receives a sensory signal from a sensor kinase and transmit it to LuxO. At low cell density, a phosphoryl group is transferred from the sensor kinase, probably on His-56 and this phosphoryl group is further transferred to LuxO. In Vibrio vulnificus (strain CMCP6), this protein is Phosphorelay protein LuxU (luxU).